A 360-amino-acid polypeptide reads, in one-letter code: tRNA-specific 2-thiouridylase MnmA (360 aa).

Residues 9–16 (AMSGGVDS) and leucine 35 each bind ATP. The active-site Nucleophile is the cysteine 104. Cysteine 104 and cysteine 197 form a disulfide bridge. Residue glycine 128 coordinates ATP. Positions 147-149 (KDQ) are interaction with tRNA. Residue cysteine 197 is the Cysteine persulfide intermediate of the active site.

It belongs to the MnmA/TRMU family.

It is found in the cytoplasm. It carries out the reaction S-sulfanyl-L-cysteinyl-[protein] + uridine(34) in tRNA + AH2 + ATP = 2-thiouridine(34) in tRNA + L-cysteinyl-[protein] + A + AMP + diphosphate + H(+). Functionally, catalyzes the 2-thiolation of uridine at the wobble position (U34) of tRNA, leading to the formation of s(2)U34. In Salinispora arenicola (strain CNS-205), this protein is tRNA-specific 2-thiouridylase MnmA.